Here is an 850-residue protein sequence, read N- to C-terminus: Response regulator sskA (850 aa).

Disordered regions lie at residues 1–225 (MPDR…GASS) and 419–542 (IPQR…GQSP). The segment covering 7–25 (SQLLKSKLLRRSSTTATTS) has biased composition (low complexity). Over residues 117–138 (GANSRQEGSQNGSIQQSPTFTR) the composition is skewed to polar residues. Residues 144–163 (QLTEEKDKGKLQSREGDQRG) are compositionally biased toward basic and acidic residues. Over residues 177–196 (SDPQYSLTTELANKPSTPQT) the composition is skewed to polar residues. Positions 436–445 (HHSEPGEHGE) are enriched in basic and acidic residues. Positions 477–490 (PSISILTTDSNMAS) are enriched in polar residues. Residues 492 to 511 (PQPPVAAPQVPTPPGPPPES) show a composition bias toward pro residues. Residues 558–719 (NVLIVEDNII…WLEQKVTEWG (162 aa)) form the Response regulatory domain. Residue aspartate 607 is modified to 4-aspartylphosphate. Residues 736 to 850 (FADEPQSSSP…DEEQQALDAT (115 aa)) form a disordered region. The segment covering 762–782 (SSRTSTSPSSAAVNATARAFA) has biased composition (low complexity). The span at 819 to 828 (TLDSPASPLT) shows a compositional bias: polar residues. Residues 839 to 850 (PGDEEQQALDAT) show a composition bias toward acidic residues.

It belongs to the SSK1 family.

It localises to the cytoplasm. Its function is as follows. Final receptor of the osmolarity two-component system regulatory system, which controls activity of the sakA mitogen-activated protein kinase (MAPK) pathway in response to changes in the osmolarity of the extracellular environment. Regulates the germination in the airways that drives enhanced disease initiation and inflammation in the lungs. The polypeptide is Response regulator sskA (Aspergillus fumigatus (strain ATCC MYA-4609 / CBS 101355 / FGSC A1100 / Af293) (Neosartorya fumigata)).